The sequence spans 229 residues: Large ribosomal subunit protein uL1 (229 aa).

The protein belongs to the universal ribosomal protein uL1 family. As to quaternary structure, part of the 50S ribosomal subunit.

Binds directly to 23S rRNA. The L1 stalk is quite mobile in the ribosome, and is involved in E site tRNA release. In terms of biological role, protein L1 is also a translational repressor protein, it controls the translation of the L11 operon by binding to its mRNA. This chain is Large ribosomal subunit protein uL1, found in Streptococcus sanguinis (strain SK36).